The sequence spans 263 residues: Phosphonates import ATP-binding protein PhnC 1 (263 aa).

Positions 3-248 (IQVENLWVAF…KEKELYFGEK (246 aa)) constitute an ABC transporter domain. 37–44 (GPSGAGKS) is a binding site for ATP.

Belongs to the ABC transporter superfamily. Phosphonates importer (TC 3.A.1.9.1) family. As to quaternary structure, the complex is composed of two ATP-binding proteins (PhnC), two transmembrane proteins (PhnE) and a solute-binding protein (PhnD).

It is found in the cell inner membrane. The enzyme catalyses phosphonate(out) + ATP + H2O = phosphonate(in) + ADP + phosphate + H(+). Its function is as follows. Part of the ABC transporter complex PhnCDE involved in phosphonates import. Responsible for energy coupling to the transport system. The sequence is that of Phosphonates import ATP-binding protein PhnC 1 from Synechococcus sp. (strain JA-2-3B'a(2-13)) (Cyanobacteria bacterium Yellowstone B-Prime).